Here is a 108-residue protein sequence, read N- to C-terminus: MQITDVRIKLLNIDNRLKAIASVTFDDEIVIHDIKVIEGEEGLFLAMPSRKVGNDRYRDIAHPISSPAREKIETAVINKYNEEFEKQSSVETEPVTEENMETAENENE.

Residues 84–108 (FEKQSSVETEPVTEENMETAENENE) form a disordered region. Over residues 94–108 (PVTEENMETAENENE) the composition is skewed to acidic residues.

Belongs to the SpoVG family.

Its function is as follows. Could be involved in septation. This is Putative septation protein SpoVG from Finegoldia magna (strain ATCC 29328 / DSM 20472 / WAL 2508) (Peptostreptococcus magnus).